Reading from the N-terminus, the 362-residue chain is Chalcone synthase A (362 aa).

The active site involves Cys168.

It belongs to the thiolase-like superfamily. Chalcone/stilbene synthases family.

The enzyme catalyses (E)-4-coumaroyl-CoA + 3 malonyl-CoA + 3 H(+) = 2',4,4',6'-tetrahydroxychalcone + 3 CO2 + 4 CoA. It participates in secondary metabolite biosynthesis; flavonoid biosynthesis. The primary product of this enzyme is 4,2',4',6'-tetrahydroxychalcone (also termed naringenin-chalcone or chalcone) which can under specific conditions spontaneously isomerize into naringenin. The protein is Chalcone synthase A (CHSA) of Ipomoea platensis (Morning glory).